The following is a 611-amino-acid chain: Solute carrier family 23 member 3 (611 aa).

Topologically, residues 1–52 (MSRSPLHPIPLLSEGYQDTPAPLPPLLPPLQNPSSRSWASRVFGPSTWGLSC) are cytoplasmic. Residues 53–73 (LLALQHFLVLASLLWASHLLL) form a helical membrane-spanning segment. Residues 74–88 (LHGLPPGGLSYPPAQ) lie on the Extracellular side of the membrane. A helical transmembrane segment spans residues 89-109 (LLASSFFSCGLSTVLQTWMGS). Topologically, residues 110 to 168 (RLPLIQAPSLEFLIPALVLTNQKLPLTTKTPGNASLSLPLCSLTRSCHGLELWNTSLRE) are cytoplasmic. A helical membrane pass occupies residues 169 to 189 (VSGAVVVSGLLQGTIGLLGVP). The Extracellular segment spans residues 190-191 (GR). A helical membrane pass occupies residues 192–212 (VFPYCGPLVLAPSLVVAGLSA). Residues 213-215 (HKE) are Cytoplasmic-facing. Residues 216 to 236 (VAQFCSAHWGLALLLILLMVV) traverse the membrane as a helical segment. Residues 237 to 269 (CSQHLGSCQIPLCSWRPSSTSTHICIPVFRLLS) lie on the Extracellular side of the membrane. A helical membrane pass occupies residues 270–290 (VLAPVACVWFISAFVGTSVIP). At 291 to 319 (LQLSEPSDAPWFWLPHPGEWEWPLLTPRA) the chain is on the cytoplasmic side. The helical transmembrane segment at 320 to 340 (LAAGISMALAASTSSLGCYAL) threads the bilayer. Residues 341–358 (CGQLLRLSPPPPHACSRG) are Extracellular-facing. A helical transmembrane segment spans residues 359–379 (LSLEGLGSVLAGLLGSPLGTA). At 380–397 (SSFPNVGTVSLFQTGSRR) the chain is on the cytoplasmic side. The chain crosses the membrane as a helical span at residues 398-417 (VAHLVGLFCMGLGLSPRLAQ). Topologically, residues 418 to 426 (LFTSIPLPV) are extracellular. The chain crosses the membrane as a helical span at residues 427–449 (LGGVLGVTQAVVLSAGFSSFHLA). Over 450–455 (DIDSGR) the chain is Cytoplasmic. The chain crosses the membrane as a helical span at residues 456 to 475 (NVFIVGFSIFMALLLPRWLR). The Extracellular portion of the chain corresponds to 476-489 (EAPVLLNTGWSPLD). A helical membrane pass occupies residues 490-510 (MFLRSLLAEPIFLAGLLGFLL). Residues 511–611 (ENTISGTRAE…TASREGVRSQ (101 aa)) are Cytoplasmic-facing. Residues 574–611 (PEDSGDEGGSSKTGERADLLPNSGESYSTASREGVRSQ) form a disordered region. Over residues 596 to 605 (SGESYSTASR) the composition is skewed to polar residues.

It belongs to the nucleobase:cation symporter-2 (NCS2) (TC 2.A.40) family.

Its subcellular location is the membrane. The protein localises to the cytoplasm. It carries out the reaction hypoxanthine(out) + Na(+)(out) = hypoxanthine(in) + Na(+)(in). Its function is as follows. Acts as a sodium-dependent hypoxanthine transporter. May show xanthine-hypoxanthine exchange activity. The sequence is that of Solute carrier family 23 member 3 (Slc23a3) from Mus musculus (Mouse).